The following is a 239-amino-acid chain: 1-(5-phosphoribosyl)-5-[(5-phosphoribosylamino)methylideneamino] imidazole-4-carboxamide isomerase (239 aa).

The Proton acceptor role is filled by aspartate 9. Aspartate 131 serves as the catalytic Proton donor.

It belongs to the HisA/HisF family.

The protein localises to the cytoplasm. The catalysed reaction is 1-(5-phospho-beta-D-ribosyl)-5-[(5-phospho-beta-D-ribosylamino)methylideneamino]imidazole-4-carboxamide = 5-[(5-phospho-1-deoxy-D-ribulos-1-ylimino)methylamino]-1-(5-phospho-beta-D-ribosyl)imidazole-4-carboxamide. Its pathway is amino-acid biosynthesis; L-histidine biosynthesis; L-histidine from 5-phospho-alpha-D-ribose 1-diphosphate: step 4/9. The polypeptide is 1-(5-phosphoribosyl)-5-[(5-phosphoribosylamino)methylideneamino] imidazole-4-carboxamide isomerase (Bacteroides fragilis (strain YCH46)).